A 254-amino-acid polypeptide reads, in one-letter code: Pimeloyl-[acyl-carrier protein] methyl ester esterase (254 aa).

Positions 14 to 242 constitute an AB hydrolase-1 domain; the sequence is LVLLHGWGMN…ASHAPFISHP (229 aa). Substrate contacts are provided by residues tryptophan 20, 82–83, and 143–147; these read SL and FLAIQ. Catalysis depends on serine 82, which acts as the Nucleophile. Active-site residues include aspartate 207 and histidine 235. Histidine 235 serves as a coordination point for substrate.

This sequence belongs to the AB hydrolase superfamily. Carboxylesterase BioH family. In terms of assembly, monomer.

It is found in the cytoplasm. It catalyses the reaction 6-carboxyhexanoyl-[ACP] methyl ester + H2O = 6-carboxyhexanoyl-[ACP] + methanol + H(+). It functions in the pathway cofactor biosynthesis; biotin biosynthesis. Functionally, the physiological role of BioH is to remove the methyl group introduced by BioC when the pimeloyl moiety is complete. It allows to synthesize pimeloyl-ACP via the fatty acid synthetic pathway through the hydrolysis of the ester bonds of pimeloyl-ACP esters. This chain is Pimeloyl-[acyl-carrier protein] methyl ester esterase, found in Aeromonas hydrophila subsp. hydrophila (strain ATCC 7966 / DSM 30187 / BCRC 13018 / CCUG 14551 / JCM 1027 / KCTC 2358 / NCIMB 9240 / NCTC 8049).